Here is a 62-residue protein sequence, read N- to C-terminus: Large ribosomal subunit protein uL29 (62 aa).

This sequence belongs to the universal ribosomal protein uL29 family.

In Geobacter metallireducens (strain ATCC 53774 / DSM 7210 / GS-15), this protein is Large ribosomal subunit protein uL29.